Reading from the N-terminus, the 297-residue chain is MKLLAKAPLNLLRAFEAAGRTGAFALAASELELSPSAISHAIRKLENLLDVRLFQRSTREITLTKEGEILLEHIQRGFNELQQGLALVTADESRPLRLHTAPSFAHQWLLPRLGKFIRENPSIDLRLSASTEYARFEQDDFDLDIVYGEPRPSPYEKIPLAVEELTPLCSPQLAERLKKPEDLYALTLIQCDVQLYQWKGWFEANKMTPPNNYGLRFDRSFMAIAAAVDGLGVVLESKLLAEREIASGKLVCPLVNSTSEIHYIGHYLVFPQHQHMHSALDVFKTWLLNELNLGKIR.

Positions 7-64 constitute an HTH lysR-type domain; that stretch reads APLNLLRAFEAAGRTGAFALAASELELSPSAISHAIRKLENLLDVRLFQRSTREITLT. The H-T-H motif DNA-binding region spans 24–44; it reads FALAASELELSPSAISHAIRK.

Belongs to the LysR transcriptional regulatory family.

In terms of biological role, apparent regulatory gene involved in peroxide resistance in stationary phase. The polypeptide is HTH-type transcriptional regulator PerR (perR) (Escherichia coli (strain K12)).